The sequence spans 337 residues: 4-hydroxythreonine-4-phosphate dehydrogenase (337 aa).

Substrate-binding residues include His-138 and Thr-139. A divalent metal cation-binding residues include His-168, His-212, and His-267. Residues Lys-275, Asn-284, and Arg-293 each coordinate substrate.

The protein belongs to the PdxA family. In terms of assembly, homodimer. Requires Zn(2+) as cofactor. The cofactor is Mg(2+). Co(2+) is required as a cofactor.

Its subcellular location is the cytoplasm. It catalyses the reaction 4-(phosphooxy)-L-threonine + NAD(+) = 3-amino-2-oxopropyl phosphate + CO2 + NADH. Its pathway is cofactor biosynthesis; pyridoxine 5'-phosphate biosynthesis; pyridoxine 5'-phosphate from D-erythrose 4-phosphate: step 4/5. Functionally, catalyzes the NAD(P)-dependent oxidation of 4-(phosphooxy)-L-threonine (HTP) into 2-amino-3-oxo-4-(phosphooxy)butyric acid which spontaneously decarboxylates to form 3-amino-2-oxopropyl phosphate (AHAP). The polypeptide is 4-hydroxythreonine-4-phosphate dehydrogenase (Beijerinckia indica subsp. indica (strain ATCC 9039 / DSM 1715 / NCIMB 8712)).